Consider the following 72-residue polypeptide: Cell division protein ZapB (72 aa).

Positions 2 to 72 (SLEILDQLEG…RSLLGQIDNV (71 aa)) form a coiled coil. The tract at residues 34–57 (NQQAQQANDELRSENEQLKGEHNN) is disordered. Residues 42 to 57 (DELRSENEQLKGEHNN) are compositionally biased toward basic and acidic residues.

The protein belongs to the ZapB family. Homodimer. The ends of the coiled-coil dimer bind to each other, forming polymers. Interacts with FtsZ.

Its subcellular location is the cytoplasm. Non-essential, abundant cell division factor that is required for proper Z-ring formation. It is recruited early to the divisome by direct interaction with FtsZ, stimulating Z-ring assembly and thereby promoting cell division earlier in the cell cycle. Its recruitment to the Z-ring requires functional FtsA or ZipA. The sequence is that of Cell division protein ZapB from Mannheimia succiniciproducens (strain KCTC 0769BP / MBEL55E).